Reading from the N-terminus, the 491-residue chain is UDP-N-acetylmuramate--L-alanine ligase (491 aa).

An ATP-binding site is contributed by 126 to 132 (GTHGKTT).

It belongs to the MurCDEF family.

Its subcellular location is the cytoplasm. The catalysed reaction is UDP-N-acetyl-alpha-D-muramate + L-alanine + ATP = UDP-N-acetyl-alpha-D-muramoyl-L-alanine + ADP + phosphate + H(+). It functions in the pathway cell wall biogenesis; peptidoglycan biosynthesis. In terms of biological role, cell wall formation. This is UDP-N-acetylmuramate--L-alanine ligase from Shigella boydii serotype 18 (strain CDC 3083-94 / BS512).